A 255-amino-acid chain; its full sequence is Tachylectin-2 (255 aa).

A signal peptide spans 1–19; it reads MKFLLVVLGFIGFLKDGIT. WD repeat units lie at residues 20-67, 68-114, 115-161, 162-208, and 209-255; these read VGGE…FLFL, SPGG…FLFF, DPNG…FLFF, HPNG…FLFF, and SSVG…FLFF.

Monomer.

It localises to the secreted. The protein resides in the cytoplasmic granule. Functionally, lectin that binds specifically to N-acetylglucosamine and N-acetylgalactosamine. Is part of the innate immunity host defense system of the horseshoe crab. In Tachypleus tridentatus (Japanese horseshoe crab), this protein is Tachylectin-2.